The primary structure comprises 278 residues: Inosose isomerase (278 aa).

Glu-142, Asp-174, His-200, and Glu-246 together coordinate a divalent metal cation.

This sequence belongs to the IolI family. It depends on a divalent metal cation as a cofactor.

The catalysed reaction is scyllo-inosose = scyllo-inosine. It functions in the pathway polyol metabolism; myo-inositol degradation into acetyl-CoA. Involved in the reversible interconverion of 2-keto-myo-inositol (2KMI, inosose or 2,4,6/3,5-pentahydroxycyclohexanone) to 1-keto-D-chiro-inositol (1KDCI or 2,3,5/4,6-pentahydroxycyclohexanone). This is Inosose isomerase (iolI) from Bacillus licheniformis (strain ATCC 14580 / DSM 13 / JCM 2505 / CCUG 7422 / NBRC 12200 / NCIMB 9375 / NCTC 10341 / NRRL NRS-1264 / Gibson 46).